The following is a 521-amino-acid chain: Protein nucleotidyltransferase YdiU (521 aa).

Residues Gly109, Gly111, Arg112, Lys131, Asp143, Gly144, Arg194, and Arg201 each coordinate ATP. Catalysis depends on Asp270, which acts as the Proton acceptor. Mg(2+) contacts are provided by Asn271 and Asp280. An ATP-binding site is contributed by Asp280.

This sequence belongs to the SELO family. Requires Mg(2+) as cofactor. It depends on Mn(2+) as a cofactor.

The enzyme catalyses L-seryl-[protein] + ATP = 3-O-(5'-adenylyl)-L-seryl-[protein] + diphosphate. It catalyses the reaction L-threonyl-[protein] + ATP = 3-O-(5'-adenylyl)-L-threonyl-[protein] + diphosphate. It carries out the reaction L-tyrosyl-[protein] + ATP = O-(5'-adenylyl)-L-tyrosyl-[protein] + diphosphate. The catalysed reaction is L-histidyl-[protein] + UTP = N(tele)-(5'-uridylyl)-L-histidyl-[protein] + diphosphate. The enzyme catalyses L-seryl-[protein] + UTP = O-(5'-uridylyl)-L-seryl-[protein] + diphosphate. It catalyses the reaction L-tyrosyl-[protein] + UTP = O-(5'-uridylyl)-L-tyrosyl-[protein] + diphosphate. Its function is as follows. Nucleotidyltransferase involved in the post-translational modification of proteins. It can catalyze the addition of adenosine monophosphate (AMP) or uridine monophosphate (UMP) to a protein, resulting in modifications known as AMPylation and UMPylation. The polypeptide is Protein nucleotidyltransferase YdiU (Burkholderia pseudomallei (strain K96243)).